The sequence spans 447 residues: Phosphoglucosamine mutase (447 aa).

The active-site Phosphoserine intermediate is S104. Mg(2+)-binding residues include S104, D243, D245, and D247. At S104 the chain carries Phosphoserine.

Belongs to the phosphohexose mutase family. The cofactor is Mg(2+). In terms of processing, activated by phosphorylation.

It carries out the reaction alpha-D-glucosamine 1-phosphate = D-glucosamine 6-phosphate. Functionally, catalyzes the conversion of glucosamine-6-phosphate to glucosamine-1-phosphate. The protein is Phosphoglucosamine mutase of Corynebacterium glutamicum (strain ATCC 13032 / DSM 20300 / JCM 1318 / BCRC 11384 / CCUG 27702 / LMG 3730 / NBRC 12168 / NCIMB 10025 / NRRL B-2784 / 534).